The sequence spans 479 residues: Sulfate adenylyltransferase subunit 1 (479 aa).

Positions 25 to 239 (KSLLRFLTCG…EVLETVDIQR (215 aa)) constitute a tr-type G domain. Residues 34–41 (GSVDDGKS) are G1. A GTP-binding site is contributed by 34-41 (GSVDDGKS). The tract at residues 92-96 (GITID) is G2. A G3 region spans residues 113-116 (DTPG). GTP contacts are provided by residues 113–117 (DTPGH) and 168–171 (NKMD). Residues 168-171 (NKMD) are G4. Residues 206–208 (SAL) are G5.

This sequence belongs to the TRAFAC class translation factor GTPase superfamily. Classic translation factor GTPase family. CysN/NodQ subfamily. In terms of assembly, heterodimer composed of CysD, the smaller subunit, and CysN.

It carries out the reaction sulfate + ATP + H(+) = adenosine 5'-phosphosulfate + diphosphate. It functions in the pathway sulfur metabolism; hydrogen sulfide biosynthesis; sulfite from sulfate: step 1/3. In terms of biological role, with CysD forms the ATP sulfurylase (ATPS) that catalyzes the adenylation of sulfate producing adenosine 5'-phosphosulfate (APS) and diphosphate, the first enzymatic step in sulfur assimilation pathway. APS synthesis involves the formation of a high-energy phosphoric-sulfuric acid anhydride bond driven by GTP hydrolysis by CysN coupled to ATP hydrolysis by CysD. This chain is Sulfate adenylyltransferase subunit 1, found in Salmonella newport (strain SL254).